The primary structure comprises 828 residues: Periplasmic nitrate reductase (828 aa).

Positions 1-31 (MKLSRRSFMKANAVAAAAAAAGLSVPGVARA) form a signal peptide, tat-type signal. Residues 39–95 (IKWDKAPCRFCGTGCGVLVGTQQGRVVACQGDPDAPVNRGLNCIKGYFLPKIMYGKD) form the 4Fe-4S Mo/W bis-MGD-type domain. [4Fe-4S] cluster contacts are provided by Cys-46, Cys-49, Cys-53, and Cys-81. Mo-bis(molybdopterin guanine dinucleotide) is bound by residues Lys-83, Gln-150, Asn-175, Cys-179, 212–219 (WGANMAEM), 243–247 (STYQH), 262–264 (QSD), Met-372, Gln-376, Asn-482, 508–509 (SD), Lys-531, Asp-558, and 718–727 (TGRVLEHWHT). Phe-794 is a substrate binding site. Asn-802 and Lys-819 together coordinate Mo-bis(molybdopterin guanine dinucleotide).

It belongs to the prokaryotic molybdopterin-containing oxidoreductase family. NasA/NapA/NarB subfamily. In terms of assembly, component of the periplasmic nitrate reductase NapAB complex composed of NapA and NapB. It depends on [4Fe-4S] cluster as a cofactor. Mo-bis(molybdopterin guanine dinucleotide) is required as a cofactor. Predicted to be exported by the Tat system. The position of the signal peptide cleavage has not been experimentally proven.

The protein localises to the periplasm. The catalysed reaction is 2 Fe(II)-[cytochrome] + nitrate + 2 H(+) = 2 Fe(III)-[cytochrome] + nitrite + H2O. In terms of biological role, catalytic subunit of the periplasmic nitrate reductase complex NapAB. Receives electrons from NapB and catalyzes the reduction of nitrate to nitrite. The polypeptide is Periplasmic nitrate reductase (Escherichia coli O8 (strain IAI1)).